A 500-amino-acid chain; its full sequence is Na(+)/H(+) antiporter NhaB (500 aa).

13 consecutive transmembrane segments (helical) span residues 11 to 31 (HGFLGQSPLWYKAIICLFLVL), 34 to 54 (LLLVTVGPVAAGWALVLEFIF), 58 to 78 (MALKCYPLMPGGLLLVEALLL), 96 to 116 (VILLLMFMVAGIHFMKELLLF), 129 to 149 (AILSLLFCVLSAFLSAFLDAL), 150 to 170 (TVTAVIISAAVGFYAVYHRVA), 205 to 225 (LLMHGAVGTALGGVCTLVGEP), 241 to 261 (FFFKVAPVSLPVLGAGLLTCV), 311 to 331 (ILIICLGLHVAEVGLIGLMVI), 350 to 370 (FQDAMPFTSLLVVFFAVVAVI), 394 to 414 (MLYLANGLLSAISDNVFVATI), 450 to 470 (ATPNGQAAFLFLLTSAIAPLI), and 477 to 497 (MVWMALPYTVVMGGLGWWAVT).

Belongs to the NhaB Na(+)/H(+) (TC 2.A.34) antiporter family.

The protein resides in the cell inner membrane. It catalyses the reaction 2 Na(+)(in) + 3 H(+)(out) = 2 Na(+)(out) + 3 H(+)(in). Functionally, na(+)/H(+) antiporter that extrudes sodium in exchange for external protons. The protein is Na(+)/H(+) antiporter NhaB of Pseudomonas putida (strain GB-1).